We begin with the raw amino-acid sequence, 88 residues long: MLTNADREQIIAQYQRGESDTGSPEVQVALLSARINDLQNHFKAHKADHHSRRGLIRMVNTRRKLLDYLKSKDLGRYTTLISQLGLRR.

The protein belongs to the universal ribosomal protein uS15 family. Part of the 30S ribosomal subunit. Forms a bridge to the 50S subunit in the 70S ribosome, contacting the 23S rRNA.

Functionally, one of the primary rRNA binding proteins, it binds directly to 16S rRNA where it helps nucleate assembly of the platform of the 30S subunit by binding and bridging several RNA helices of the 16S rRNA. Forms an intersubunit bridge (bridge B4) with the 23S rRNA of the 50S subunit in the ribosome. The protein is Small ribosomal subunit protein uS15 of Psychrobacter arcticus (strain DSM 17307 / VKM B-2377 / 273-4).